The sequence spans 395 residues: Xylose isomerase (395 aa).

Catalysis depends on residues H54 and D57. Residues E181, E217, H220, D245, D255, D257, and D293 each contribute to the Mg(2+) site.

The protein belongs to the xylose isomerase family. Homotetramer. Requires Mg(2+) as cofactor.

It is found in the cytoplasm. The enzyme catalyses alpha-D-xylose = alpha-D-xylulofuranose. This chain is Xylose isomerase, found in Arthrobacter sp. (strain FB24).